A 292-amino-acid polypeptide reads, in one-letter code: 33 kDa chaperonin (292 aa).

Intrachain disulfides connect Cys-230/Cys-232 and Cys-263/Cys-266.

The protein belongs to the HSP33 family. Under oxidizing conditions two disulfide bonds are formed involving the reactive cysteines. Under reducing conditions zinc is bound to the reactive cysteines and the protein is inactive.

Its subcellular location is the cytoplasm. Functionally, redox regulated molecular chaperone. Protects both thermally unfolding and oxidatively damaged proteins from irreversible aggregation. Plays an important role in the bacterial defense system toward oxidative stress. This chain is 33 kDa chaperonin, found in Shigella dysenteriae serotype 1 (strain Sd197).